The chain runs to 379 residues: MVVKQKADYAALKEELIAYAYEIGIQKIGFTTADPFLFLKERLLEAEALDLFTGFEHPVIEERVYPELIFKEPQSIIAIALAYPSKLKEAPVSKKGARRGVFARASWGIDYHTVLREKLALLETFLIERLPDVRMKSMVDTGELSDVAVAERAGIGWRGKNTLLITPEYGSWVYLGEMITNIPFEPDTPASDLCGSCNQCVKACPTGSLLGEGKMNPKICLSYLTQTKDFLDEKYREVLHNRLYGCDTCQVVCPYNRGHDFHFHEEMEPDPELVRPELKPLLHISNRAFKEQFGDMAGSWRGKKPIQRNAIIILARYKDKTAVPDLIDCLQNDPRPVIRGTAGWALRKIGGRDAEEAVERALQTEQDVQVLQELTAIPN.

Catalysis depends on Asp140, which acts as the Proton donor. One can recognise a 4Fe-4S ferredoxin-type domain in the interval 184–214; it reads FEPDTPASDLCGSCNQCVKACPTGSLLGEGK. 8 residues coordinate [4Fe-4S] cluster: Cys194, Cys197, Cys200, Cys204, Cys220, Cys246, Cys249, and Cys253. One copy of the HEAT-like PBS-type repeat lies at 307 to 332; the sequence is QRNAIIILARYKDKTAVPDLIDCLQN.

Belongs to the QueG family. As to quaternary structure, monomer. It depends on cob(II)alamin as a cofactor. [4Fe-4S] cluster serves as cofactor.

It is found in the cytoplasm. It catalyses the reaction epoxyqueuosine(34) in tRNA + AH2 = queuosine(34) in tRNA + A + H2O. Its pathway is tRNA modification; tRNA-queuosine biosynthesis. Functionally, catalyzes the conversion of epoxyqueuosine (oQ) to queuosine (Q), which is a hypermodified base found in the wobble positions of tRNA(Asp), tRNA(Asn), tRNA(His) and tRNA(Tyr). The chain is Epoxyqueuosine reductase from Listeria monocytogenes serovar 1/2a (strain ATCC BAA-679 / EGD-e).